We begin with the raw amino-acid sequence, 425 residues long: GTPase Obg (425 aa).

An Obg domain is found at 1–158 (MFVDQVKVYV…RYIVMELKLI (158 aa)). Residues 118–144 (KGGRGGRGNNRFANSSNPAPHISENGE) form a disordered region. The region spanning 159–327 (ADVGLVGYPS…LMYAIGDTLA (169 aa)) is the OBG-type G domain. Residues 165–172 (GYPSVGKS), 190–194 (FTTLT), 211–214 (DLPG), 281–284 (NKME), and 308–310 (SAA) each bind ATP. Residues S172 and T192 each contribute to the Mg(2+) site. The region spanning 348-425 (RAEKEPDAFE…IGKLEFDFVE (78 aa)) is the OCT domain.

It belongs to the TRAFAC class OBG-HflX-like GTPase superfamily. OBG GTPase family. In terms of assembly, monomer. Mg(2+) serves as cofactor.

The protein localises to the cytoplasm. Functionally, an essential GTPase which binds GTP, GDP and possibly (p)ppGpp with moderate affinity, with high nucleotide exchange rates and a fairly low GTP hydrolysis rate. Plays a role in control of the cell cycle, stress response, ribosome biogenesis and in those bacteria that undergo differentiation, in morphogenesis control. This Brevibacillus brevis (strain 47 / JCM 6285 / NBRC 100599) protein is GTPase Obg.